A 312-amino-acid polypeptide reads, in one-letter code: Protoheme IX farnesyltransferase (312 aa).

Helical transmembrane passes span 12-32, 41-61, 93-113, 114-134, 141-161, 168-188, 240-260, and 290-310; these read LALTKPRVIELLLVATIPAML, FGLILLTLIGGWMGAGAANTF, VFAWVLLIASVLWLGFLCHSW, LAAGFIVLTNWFYVFVYTKWL, NVIWGGAAGCMPVIVGWAVIT, FHAGWSSWLQAIILFMIIFFW, VPAASWIYLAAALISGGWFII, and ILFVALSVDAVLGWQTLAHAV.

This sequence belongs to the UbiA prenyltransferase family. Protoheme IX farnesyltransferase subfamily.

The protein localises to the cell membrane. It carries out the reaction heme b + (2E,6E)-farnesyl diphosphate + H2O = Fe(II)-heme o + diphosphate. The protein operates within porphyrin-containing compound metabolism; heme O biosynthesis; heme O from protoheme: step 1/1. In terms of biological role, converts heme B (protoheme IX) to heme O by substitution of the vinyl group on carbon 2 of heme B porphyrin ring with a hydroxyethyl farnesyl side group. This Corynebacterium jeikeium (strain K411) protein is Protoheme IX farnesyltransferase.